The primary structure comprises 113 residues: C-C motif chemokine 15 (113 aa).

The signal sequence occupies residues 1 to 21 (MKVSVAALSCLMLVAVLGSQA). 3 disulfide bridges follow: cysteine 53/cysteine 77, cysteine 54/cysteine 93, and cysteine 64/cysteine 104.

This sequence belongs to the intercrine beta (chemokine CC) family. Monomer. Post-translationally, the N-terminal is proteolytically cleaved by proteases associated with inflammatory responses. The processed forms CCL15(22-92), CCL15(25-92) and CCL15(29-92) exhibit increase in CCR1-mediated signaling and chemotaxis assays in vitro. In terms of tissue distribution, most abundant in heart, skeletal muscle and adrenal gland. Lower levels in placenta, liver, pancreas and bone marrow. CCL15(22-92), CCL15(25-92) and CCL15(29-92) are found in high levels in synovial fluids from rheumatoid patients.

The protein resides in the secreted. Chemotactic factor that attracts T-cells and monocytes, but not neutrophils, eosinophils, or B-cells. Acts mainly via CC chemokine receptor CCR1. Also binds to CCR3. CCL15(22-92), CCL15(25-92) and CCL15(29-92) are more potent chemoattractants than the CCL15. The protein is C-C motif chemokine 15 (CCL15) of Homo sapiens (Human).